Consider the following 631-residue polypeptide: UvrABC system protein C (631 aa).

The disordered stretch occupies residues M1–P20. Positions M34 to V112 constitute a GIY-YIG domain. The UVR domain maps to T222–V257.

Belongs to the UvrC family. Interacts with UvrB in an incision complex.

The protein localises to the cytoplasm. In terms of biological role, the UvrABC repair system catalyzes the recognition and processing of DNA lesions. UvrC both incises the 5' and 3' sides of the lesion. The N-terminal half is responsible for the 3' incision and the C-terminal half is responsible for the 5' incision. The protein is UvrABC system protein C of Jannaschia sp. (strain CCS1).